The following is a 120-amino-acid chain: MFLLHEYDIFWAFLIISSVIPILAFLISGVLAPISEGPEKLSSYESGIEPMGDAWLQFRIRYYMFALVFVVFDVETVFLYPWAMSFDVLGVSVFIEALIFVLIPIVGSVYAWRKGALEWS.

The next 3 helical transmembrane spans lie at 9-29, 64-84, and 88-108; these read IFWA…LISG, MFAL…PWAM, and VLGV…IVGS.

This sequence belongs to the complex I subunit 3 family. In terms of assembly, NDH is composed of at least 16 different subunits, 5 of which are encoded in the nucleus.

The protein resides in the plastid. It is found in the chloroplast thylakoid membrane. The catalysed reaction is a plastoquinone + NADH + (n+1) H(+)(in) = a plastoquinol + NAD(+) + n H(+)(out). It carries out the reaction a plastoquinone + NADPH + (n+1) H(+)(in) = a plastoquinol + NADP(+) + n H(+)(out). In terms of biological role, NDH shuttles electrons from NAD(P)H:plastoquinone, via FMN and iron-sulfur (Fe-S) centers, to quinones in the photosynthetic chain and possibly in a chloroplast respiratory chain. The immediate electron acceptor for the enzyme in this species is believed to be plastoquinone. Couples the redox reaction to proton translocation, and thus conserves the redox energy in a proton gradient. The protein is NAD(P)H-quinone oxidoreductase subunit 3, chloroplastic of Liriodendron tulipifera (Tuliptree).